Here is a 1161-residue protein sequence, read N- to C-terminus: Immunoglobulin superfamily member 3 (1161 aa).

Positions 1–16 (MGTAALLILLAGVSWA) are cleaved as a signal peptide. Topologically, residues 17–1091 (QREVAIQPGP…LQSTICANDA (1075 aa)) are extracellular. 8 Ig-like C2-type domains span residues 18 to 135 (REVA…AKVN), 140 to 258 (PDTL…WFPL), 272 to 382 (PTDK…RGPS), 402 to 523 (PLRT…WQLL), 541 to 651 (FAVT…RETS), 674 to 796 (PRLQ…EETS), 806 to 930 (PDAN…WYRR), and 947 to 1063 (PQLQ…WYLL). 2 cysteine pairs are disulfide-bonded: cysteine 39-cysteine 117 and cysteine 164-cysteine 242. Residues 246 to 248 (EWI) carry the EWI motif motif. Disulfide bonds link cysteine 298/cysteine 372, cysteine 428/cysteine 507, cysteine 562/cysteine 641, cysteine 697/cysteine 775, cysteine 831/cysteine 914, and cysteine 970/cysteine 1047. Residues 1092-1112 (LFYLVFFYPFPIFGILIITIL) traverse the membrane as a helical segment. At 1113 to 1161 (LVRFRHRPTGKPGEGKNGVPLLWIKEPHLNYSPTCLEPPVLSIHPGTID) the chain is on the cytoplasmic side.

It localises to the membrane. The chain is Immunoglobulin superfamily member 3 (igsf3) from Xenopus tropicalis (Western clawed frog).